We begin with the raw amino-acid sequence, 188 residues long: uncharacterized protein (188 aa).

The tract at residues 121 to 142 is disordered; it reads ADTLSRKNKRSSDQKRNGQHFE. Residues 130–142 show a composition bias toward basic and acidic residues; it reads RSSDQKRNGQHFE.

Belongs to the chlamydial CPn_0422/CT_273/TC_0545 family.

This is an uncharacterized protein from Chlamydia trachomatis serovar D (strain ATCC VR-885 / DSM 19411 / UW-3/Cx).